Here is a 493-residue protein sequence, read N- to C-terminus: Trigger factor (493 aa).

Residues 162-243 (GDFVSLDLSA…VRGVKEKELP (82 aa)) enclose the PPIase FKBP-type domain. Residues 432–493 (ELALPARPAP…AAVDSGDRDI (62 aa)) are disordered. The segment covering 449 to 470 (HAGHDHEGHDHADHAGHDHAGD) has biased composition (basic and acidic residues). Residues 474-485 (AEPAEAPAATAA) are compositionally biased toward low complexity.

Belongs to the FKBP-type PPIase family. Tig subfamily.

It is found in the cytoplasm. It carries out the reaction [protein]-peptidylproline (omega=180) = [protein]-peptidylproline (omega=0). Involved in protein export. Acts as a chaperone by maintaining the newly synthesized protein in an open conformation. Functions as a peptidyl-prolyl cis-trans isomerase. In Frankia alni (strain DSM 45986 / CECT 9034 / ACN14a), this protein is Trigger factor.